Consider the following 419-residue polypeptide: Metacaspase-1A (419 aa).

The interval 1-89 (MHHQQSSYGG…PPDQPVSFGQ (89 aa)) is disordered. Residues 41–51 (NGYNSPQQNYG) are compositionally biased toward polar residues. Residues 59 to 71 (YQQQSAYQNSYNQ) show a composition bias toward low complexity. Catalysis depends on residues His-190 and Cys-246.

The protein belongs to the peptidase C14B family.

Its function is as follows. Involved in cell death (apoptosis). This is Metacaspase-1A (casA) from Aspergillus oryzae (strain ATCC 42149 / RIB 40) (Yellow koji mold).